The chain runs to 284 residues: MHIFGKILGAFFGLLLGGPFGLLFGLFIGHQFDKARRLSQAGFSTGGFGKGPSQAQRQEEFFKAAFAVMGHVAKAKGQVTKEEIQLATAMMDRMNLHGEQRRAAQDAFREGKESDFPLEDVLVRVKISTAGRFDLLQFFLELQISAAFADGAIHPSERNVLHKIARGLGFSSEQLERRLQMQEAAFRFQHQGGFHGQQQGQYQSSGWQQASQADQLADAYKILDVSPEADGKTVKRAYRKLMNEHHPDKLMAKGLPPEMMNVAKEKSQEIQNAYDLIKKVKGFK.

The Periplasmic segment spans residues methionine 1–lysine 6. A helical transmembrane segment spans residues isoleucine 7–histidine 30. The Cytoplasmic portion of the chain corresponds to glutamine 31–lysine 284. Positions aspartate 218–lysine 284 constitute a J domain.

In terms of assembly, homodimer.

The protein resides in the cell inner membrane. In terms of biological role, regulatory DnaK co-chaperone. Direct interaction between DnaK and DjlA is needed for the induction of the wcaABCDE operon, involved in the synthesis of a colanic acid polysaccharide capsule, possibly through activation of the RcsB/RcsC phosphotransfer signaling pathway. The colanic acid capsule may help the bacterium survive conditions outside the host. This Vibrio parahaemolyticus serotype O3:K6 (strain RIMD 2210633) protein is Co-chaperone protein DjlA.